A 214-amino-acid chain; its full sequence is Large ribosomal subunit protein uL3 (214 aa).

The tract at residues 134-161 is disordered; the sequence is THGNSLSHRAPGSIGQCQTPGRVMKGKK. An N5-methylglutamine modification is found at Q151.

This sequence belongs to the universal ribosomal protein uL3 family. Part of the 50S ribosomal subunit. Forms a cluster with proteins L14 and L19. Methylated by PrmB.

Its function is as follows. One of the primary rRNA binding proteins, it binds directly near the 3'-end of the 23S rRNA, where it nucleates assembly of the 50S subunit. This is Large ribosomal subunit protein uL3 from Teredinibacter turnerae (strain ATCC 39867 / T7901).